The sequence spans 185 residues: Transmembrane protein 140 (185 aa).

Residues 1 to 11 (MAGPRPRWRDQ) lie on the Cytoplasmic side of the membrane. The chain crosses the membrane as a helical span at residues 12–32 (LLFMSIIVLVIVVICLMFYAL). The Extracellular portion of the chain corresponds to 33–77 (LWEAGNLTDLPNLRIGFYNFCLWNEDTSTLQCHQFPELEALGVPR). A glycan (N-linked (GlcNAc...) asparagine) is linked at Asn-38. A helical membrane pass occupies residues 78–98 (VGLGLARLGVYGSLVLTLFAP). Residues 99–114 (QPLLLAQCNSDERAWR) are Cytoplasmic-facing. A helical transmembrane segment spans residues 115–135 (LAVGFLAVSSVLLAGGLGLFL). Residues 136-150 (SYVWKWVRLSLPGPG) lie on the Extracellular side of the membrane. The helical transmembrane segment at 151-171 (FLALGSAQALLILLLIAMAVF) threads the bilayer. The Cytoplasmic segment spans residues 172-185 (PLRAERAESKLESC).

Expression significantly higher in gliomas than in normal brain tissues.

It localises to the membrane. The polypeptide is Transmembrane protein 140 (TMEM140) (Homo sapiens (Human)).